The sequence spans 180 residues: Bifunctional protein PyrR (180 aa).

Substrate-binding positions include 39-40, 103-111, and Arg136; these read TR and DDVLYTGRT. A PRPP-binding motif is present at residues 99 to 111; sequence VILIDDVLYTGRT.

The protein belongs to the purine/pyrimidine phosphoribosyltransferase family. PyrR subfamily. Homodimer and homohexamer; in equilibrium.

The enzyme catalyses UMP + diphosphate = 5-phospho-alpha-D-ribose 1-diphosphate + uracil. In terms of biological role, regulates transcriptional attenuation of the pyrimidine nucleotide (pyr) operon by binding in a uridine-dependent manner to specific sites on pyr mRNA. This disrupts an antiterminator hairpin in the RNA and favors formation of a downstream transcription terminator, leading to a reduced expression of downstream genes. Functionally, also displays a weak uracil phosphoribosyltransferase activity which is not physiologically significant. The polypeptide is Bifunctional protein PyrR (Halalkalibacterium halodurans (strain ATCC BAA-125 / DSM 18197 / FERM 7344 / JCM 9153 / C-125) (Bacillus halodurans)).